A 433-amino-acid chain; its full sequence is MSTEKFTITEHLVPGSHIREYPGSTVNQEDVLKIHVKQYTPKREGPVPDDAITFIATHGVGLPKELYEPLWDELLDQASGFHIRAIWMADVASMNQSGIHNEDKLSMDCSWMDHARDLLLMINHFRDQMPRPLVGIGHSFGGNIITNLAYLHPRLFTTLLLLDPLIQLSPPSLGFGTDAPSAINYTLWRDDVWPSREVAIRANRAIMQGMDPRCLDRMTKHFFRDLPTPLYPDVEAIKALFGTTADSTTTPVTLTTPKYHELVAQIRQNFNARDPKTGRIEVPRDTHADMDPLVAYIPLYRPEPRSTFRRLETLRPSCLWVIAGATFLNIDEIREGVKICGSGIGGSGGVPDGRVREVVLPGFGHLMPFQEVKTVAETCIVWLQQEMDRFRQTERQWKEDRDGKSHLAVEENWYKVLKPIPSGRKKRNDKGKL.

Residues 58–246 (HGVGLPKELY…IKALFGTTAD (189 aa)) form an abhydrolase domain region. Val-60 is a binding site for substrate. Residue Ser-139 is the Nucleophile of the active site. Phe-140 provides a ligand contact to substrate. Active-site residues include Asp-163 and His-365.

This sequence belongs to the AB hydrolase superfamily. MpaH hydrolase family. Homodimer.

The protein resides in the peroxisome matrix. It catalyses the reaction mycophenolyl-CoA + H2O = mycophenolate + CoA + H(+). The protein operates within secondary metabolite biosynthesis; terpenoid biosynthesis. Its function is as follows. Type I acyl-CoA thioesterase; part of the gene cluster that mediates the biosynthesis of mycophenolic acid (MPA), the first isolated antibiotic natural product in the world obtained from a culture of Penicillium brevicompactum in 1893. MpaH' acts as a peroxisomal acyl-CoA hydrolase that converts MPA-CoA into the final product MPA. The first step of the pathway is the synthesis of 5-methylorsellinic acid (5MOA) by the cytosolic polyketide synthase mpaC. 5MOA is then converted to the phthalide compound 5,7-dihydroxy-4,6-dimethylphthalide (DHMP) by the endoplasmic reticulum-bound cytochrome P450 monooxygenase mpaDE. MpaDE first catalyzes hydroxylation of 5-MOA to 4,6-dihydroxy-2-(hydroxymethyl)-3-methylbenzoic acid (DHMB). MpaDE then acts as a lactone synthase that catalyzes the ring closure to convert DHMB into DHMP. The next step is the prenylation of DHMP by the Golgi apparatus-associated prenyltransferase mpaA to yield farnesyl-DHMP (FDHMP). The ER-bound oxygenase mpaB then mediates the oxidative cleavage the C19-C20 double bond in FDHMP to yield FDHMP-3C via a mycophenolic aldehyde intermediate. The O-methyltransferase mpaG catalyzes the methylation of FDHMP-3C to yield MFDHMP-3C. After the cytosolic methylation of FDHMP-3C, MFDHMP-3C enters into peroxisomes probably via free diffusion due to its low molecular weight. Upon a peroxisomal CoA ligation reaction, catalyzed by a beta-oxidation component enzyme acyl-CoA ligase ACL891, MFDHMP-3C-CoA would then be restricted to peroxisomes for the following beta-oxidation pathway steps. The peroxisomal beta-oxidation machinery than converts MFDHMP-3C-CoA into MPA_CoA, via a beta-oxidation chain-shortening process. Finally mpaH acts as a peroxisomal acyl-CoA hydrolase with high substrate specificity toward MPA-CoA to release the final product MPA. The chain is Type I acyl-CoA thioesterase mpaH' from Penicillium brevicompactum.